We begin with the raw amino-acid sequence, 205 residues long: uncharacterized protein (205 aa).

The next 5 membrane-spanning stretches (helical) occupy residues 4–24, 105–125, 130–150, 151–171, and 182–202; these read LAFL…AIDD, KWFI…LWIL, FLLF…KIPN, WLFN…VPEC, and ITIP…KFII.

Its subcellular location is the cell membrane. This is an uncharacterized protein from Methanocaldococcus jannaschii (strain ATCC 43067 / DSM 2661 / JAL-1 / JCM 10045 / NBRC 100440) (Methanococcus jannaschii).